A 138-amino-acid polypeptide reads, in one-letter code: Fusaristatin A biosynthesis cluster protein FGSG_08206 (138 aa).

In terms of domain architecture, Stress-response A/B barrel spans 33 to 130 (VHRVTMFKMP…TIDGMMTVFF (98 aa)).

It functions in the pathway secondary metabolite biosynthesis. Its function is as follows. Part of the gene cluster that mediates the biosynthesis of the lipopeptide fusaristatin A. Fusaristatin A consists of a polyketide chain linked to three amino acid residues glutamine (Gln), dehydroalanine (dehydro-Ala), and beta-aminoisobutyric acid. The biosynthesis starts with formation of a linear polyketide chain by the highly reducing polyketide synthase PKS6. The gene cluster does not contain an acyl-CoA ligase or an acyl-transferase, and it is therefore predicted that the polyketide is transferred directly to the nonribosomal peptide synthetase NRPS7. Modules 1-3 from NRPS7 incorporate dehydro-Ala, Gln, and beta-aminoisobutyric acid in the compound, which is released by cyclization. The beta-aminoisobutyric acid units are most likely not freely available to the NRPS, but can be synthesized from thymine, which requires a dehydrogenase, a monooxygenase, and an aminotransferase. The fusaristatin A cluster contains a cytochrome P450 monooxygenase (FGSG_08207) and an aminotransferase (FGSG_17085), which theoretically can perform two of the enzymatic steps. The enzymes may however also be involved in biosynthesis of dehydroalanine or modification of the polyketide. The dehydro-Ala residue can be a result of cyclization, where serine is dehydrated. The last gene of the cluster encodes a protein with an A/B barrel domain found in variable enzymes, which hampers functional prediction. This Gibberella zeae (strain ATCC MYA-4620 / CBS 123657 / FGSC 9075 / NRRL 31084 / PH-1) (Wheat head blight fungus) protein is Fusaristatin A biosynthesis cluster protein FGSG_08206.